Here is a 525-residue protein sequence, read N- to C-terminus: Heat shock factor protein 1 (525 aa).

The residue at position 1 (Met1) is an N-acetylmethionine. The DNA-binding domain stretch occupies residues 15 to 120 (VPAFLTKLWT…LLENIKRKVT (106 aa)). An N6-acetyllysine modification is found at Lys80. An N6-acetyllysine; alternate modification is found at Lys91. A Glycyl lysine isopeptide (Lys-Gly) (interchain with G-Cter in SUMO2); alternate cross-link involves residue Lys91. An N6-acetyllysine modification is found at Lys118. Position 121 is a phosphoserine; by MAPKAPK2 (Ser121). The interval 130–203 (IKIRQDSVTK…ISLVQSNRIL (74 aa)) is hydrophobic repeat HR-A/B. A Glycyl lysine isopeptide (Lys-Gly) (interchain with G-Cter in SUMO2) cross-link involves residue Lys131. A Phosphothreonine; by CK2 modification is found at Thr142. Residues Lys150 and Lys188 each carry the N6-acetyllysine modification. A d domain region spans residues 203 to 224 (LGVKRKIPLMLNDGGPAHPMPK). Lys208 carries the N6-acetyllysine; alternate modification. Lys208 is covalently cross-linked (Glycyl lysine isopeptide (Lys-Gly) (interchain with G-Cter in SUMO2); alternate). Residues 221–310 (PMPKYGRQYS…PPSPPQSPRA (90 aa)) are regulatory domain. A Glycyl lysine isopeptide (Lys-Gly) (interchain with G-Cter in SUMO2) cross-link involves residue Lys224. Position 230 is a phosphoserine; by CAMK2A (Ser230). Positions 266-365 (SDITELAPGS…RPPSPLPASA (100 aa)) are disordered. The segment covering 272 to 283 (APGSPVASSGGS) has biased composition (low complexity). Ser275 and Ser292 each carry phosphoserine. Lys298 carries the N6-acetyllysine; alternate modification. Lys298 participates in a covalent cross-link: Glycyl lysine isopeptide (Lys-Gly) (interchain with G-Cter in SUMO2); alternate. Lys298 participates in a covalent cross-link: Glycyl lysine isopeptide (Lys-Gly) (interchain with G-Cter in SUMO); alternate. The residue at position 303 (Ser303) is a Phosphoserine; by GSK3-beta. Ser307 carries the post-translational modification Phosphoserine; by MAPK3. Residues Ser314 and Ser319 each carry the phosphoserine modification. The residue at position 320 (Ser320) is a Phosphoserine; by PKA. Thr324 is subject to Phosphothreonine. Ser327 carries the post-translational modification Phosphoserine; by MAPK12. Ser346 is subject to Phosphoserine. Phosphoserine; by MAPK8 is present on Ser359. The segment at 367-525 (EKCLSVACLD…PPKAKDPTVS (159 aa)) is transactivation domain. The tract at residues 380–405 (LSDHLDAMDSNLDNLQTMLTSHGFSV) is hydrophobic repeat HR-C. The 9aaTAD signature appears at 408–416 (STLLDLFSP). Ser415 bears the Phosphoserine; by PLK1 mark. The residue at position 440 (Ser440) is a Phosphoserine. The disordered stretch occupies residues 495–525 (YFSEGDDYSDDPTISLLTGSEPPKAKDPTVS). The residue at position 520 (Lys520) is an N6-acetyllysine.

The protein belongs to the HSF family. In terms of assembly, monomer; cytoplasmic latent and transcriptionally inactive monomeric form in unstressed cells. Homotrimer; in response to stress, such as heat shock, homotrimerizes and translocates into the nucleus, binds to heat shock element (HSE) sequences in promoter of heat shock protein (HSP) genes and acquires transcriptional ability. Interacts (via monomeric form) with FKBP4; this interaction occurs in unstressed cells. Associates (via monomeric form) with HSP90 proteins in a multichaperone complex in unnstressed cell; this association maintains HSF1 in a non-DNA-binding and transcriptional inactive form by preventing HSF1 homotrimerization. Homotrimeric transactivation activity is modulated by protein-protein interactions and post-translational modifications. Interacts with HSP90AA1; this interaction is decreased in a IER5-dependent manner, promoting HSF1 accumulation in the nucleus, homotrimerization and DNA-binding activities. Part (via regulatory domain in the homotrimeric form) of a large heat shock-induced HSP90-dependent multichaperone complex at least composed of FKBP4, FKBP5, HSP90 proteins, PPID, PPP5C and PTGES3; this association maintains the HSF1 homotrimeric DNA-bound form in a transcriptionally inactive form. Interacts with BAG3 (via BAG domain); this interaction occurs in normal and heat-shocked cells promoting nuclear shuttling of HSF1 in a BAG3-dependent manner. Interacts (via homotrimeric and hyperphosphorylated form) with FKBP4; this interaction occurs upon heat shock in a HSP90-dependent multichaperone complex. Interacts (via homotrimeric form preferentially) with EEF1A proteins. In heat shocked cells, stress-denatured proteins compete with HSF1 homotrimeric DNA-bound form for association of the HSP90-dependent multichaperone complex, and hence alleviating repression of HSF1-mediated transcriptional activity. Interacts (via homotrimeric form preferentially) with DAXX; this interaction relieves homotrimeric HSF1 from repression of its transcriptional activity by HSP90-dependent multichaperone complex upon heat shock. Interacts (via D domain and preferentially with hyperphosphorylated form) with JNK1; this interaction occurs under both normal growth conditions and immediately upon heat shock. Interacts (via D domain and preferentially with hyperphosphorylated form) with MAPK3; this interaction occurs upon heat shock. Interacts with IER5 (via central region); this interaction promotes PPP2CA-induced dephosphorylation on Ser-121, Ser-307, Ser-314 and Thr-324 and HSF1 transactivation activity. Found in a ribonucleoprotein complex composed of the HSF1 homotrimeric form, translation elongation factor eEF1A proteins and non-coding RNA heat shock RNA-1 (HSR1); this complex occurs upon heat shock and stimulates HSF1 DNA-binding activity. Interacts (via transactivation domain) with HSPA1A/HSP70 and DNAJB1; these interactions result in the inhibition of heat shock- and HSF1-induced transcriptional activity during the attenuation and recovery phase from heat shock. Interacts (via Ser-303 and Ser-307 phosphorylated form) with YWHAE; this interaction promotes HSF1 sequestration in the cytoplasm in an ERK-dependent manner. Found in a complex with IER5 and PPP2CA. Interacts with TPR; this interaction increases upon heat shock and stimulates export of HSP70 mRNA. Interacts with SYMPK (via N-terminus) and CSTF2; these interactions occur upon heat shock. Interacts (via transactivation domain) with HSPA8. Interacts with EEF1D; this interaction occurs at heat shock promoter element (HSE) sequences. Interacts with MAPKAPK2. Interacts with PRKACA/PKA. Interacts (via transactivation domain) with GTF2A2. Interacts (via transactivation domain) with GTF2B. Interacts (via transactivation domain) with TBP. Interacts with CDK9, CCNT1 and EP300. Interacts (via N-terminus) with XRCC5 (via N-terminus) and XRCC6 (via N-terminus); these interactions are direct and prevent XRCC5/XRCC6 heterodimeric binding and non-homologous end joining (NHEJ) repair activities induced by ionizing radiation (IR). Interacts with PLK1; this interaction occurs during the early mitotic period, increases upon heat shock but does not modulate neither HSF1 homotrimerization and DNA-binding activities. Interacts with CDC20; this interaction occurs in mitosis in a MAD2L1-dependent manner and prevents PLK1-stimulated degradation of HSF1 by blocking the recruitment of the SCF(BTRC) ubiquitin ligase complex. Interacts with MAD2L1; this interaction occurs in mitosis. Interacts with BTRC; this interaction occurs during mitosis, induces its ubiquitin-dependent degradation following stimulus-dependent phosphorylation, a process inhibited by CDC20. Interacts with HSP90AA1 and HSP90AB1. Forms a complex with TTC5/STRAP and p300/EP300; these interactions augment chromatin-bound HSF1 and p300/EP300 histone acetyltransferase activity. Phosphorylated. Phosphorylated in unstressed cells; this phosphorylation is constitutive and implicated in the repression of HSF1 transcriptional activity. Phosphorylated on Ser-121 by MAPKAPK2; this phosphorylation promotes interaction with HSP90 proteins and inhibits HSF1 homotrimerization, DNA-binding and transactivation activities. Phosphorylation on Ser-303 by GSK3B/GSK3-beta and on Ser-307 by MAPK3 within the regulatory domain is involved in the repression of HSF1 transcriptional activity and occurs in a RAF1-dependent manner. Phosphorylation on Ser-303 and Ser-307 increases HSF1 nuclear export in a YWHAE- and XPO1/CRM1-dependent manner. Phosphorylation on Ser-307 is a prerequisite for phosphorylation on Ser-303. According to, Ser-303 is not phosphorylated in unstressed cells. Phosphorylated on Ser-415 by PLK1; phosphorylation promotes nuclear translocation upon heat shock. Hyperphosphorylated upon heat shock and during the attenuation and recovery phase period of the heat shock response. Phosphorylated on Thr-142; this phosphorylation increases HSF1 transactivation activity upon heat shock. Phosphorylation on Ser-230 by CAMK2A; this phosphorylation enhances HSF1 transactivation activity upon heat shock. Phosphorylation on Ser-327 by MAPK12; this phosphorylation enhances HSF1 nuclear translocation, homotrimerization and transactivation activities upon heat shock. Phosphorylated on Ser-320 by PRKACA/PKA; this phosphorylation promotes nuclear localization and transcriptional activity upon heat shock. Phosphorylated on Ser-359 by MAPK8; this phosphorylation occurs upon heat shock, induces HSF1 translocation into nuclear stress bodies and negatively regulates transactivation activity. Neither basal nor stress-inducible phosphorylation on Ser-230, Ser-292, Ser-303, Ser-307, Ser-314, Ser-319, Ser-320, Thr-324, Ser-327, Ser-339, Ser-346, Ser-359 and Ser-364 within the regulatory domain is involved in the regulation of HSF1 subcellular localization or DNA-binding activity; however, it negatively regulates HSF1 transactivation activity. Phosphorylated by PLK1 in the early mitotic period; this phosphorylation regulates HSF1 localization to the spindle pole, the recruitment of the SCF(BTRC) ubiquitin ligase complex inducing HSF1 degradation, and hence mitotic progression. Dephosphorylated on Ser-121, Ser-307, Ser-314, Thr-324 by phosphatase PPP2CA in an IER5-dependent manner, leading to HSF1-mediated transactivation activity. In terms of processing, sumoylated with SUMO1 and SUMO2 upon heat shock in a ERK2-dependent manner. Sumoylated by SUMO1 on Lys-298; sumoylation occurs upon heat shock and promotes its localization to nuclear stress bodies and DNA-binding activity. Phosphorylation on Ser-303 and Ser-307 is probably a prerequisite for sumoylation. Post-translationally, acetylated on Lys-118; this acetylation is decreased in a IER5-dependent manner. Acetylated on Lys-118, Lys-208 and Lys-298; these acetylations occur in a EP300-dependent manner. Acetylated on Lys-80; this acetylation inhibits DNA-binding activity upon heat shock. Deacetylated on Lys-80 by SIRT1; this deacetylation increases DNA-binding activity. Ubiquitinated by SCF(BTRC) and degraded following stimulus-dependent phosphorylation by PLK1 in mitosis. Polyubiquitinated. Undergoes proteasomal degradation upon heat shock and during the attenuation and recovery phase period of the heat shock response.

Its subcellular location is the nucleus. The protein resides in the cytoplasm. It is found in the nucleoplasm. The protein localises to the perinuclear region. It localises to the cytoskeleton. Its subcellular location is the spindle pole. The protein resides in the microtubule organizing center. It is found in the centrosome. The protein localises to the chromosome. It localises to the centromere. Its subcellular location is the kinetochore. Functionally, functions as a stress-inducible and DNA-binding transcription factor that plays a central role in the transcriptional activation of the heat shock response (HSR), leading to the expression of a large class of molecular chaperones, heat shock proteins (HSPs), that protect cells from cellular insult damage. In unstressed cells, is present in a HSP90-containing multichaperone complex that maintains it in a non-DNA-binding inactivated monomeric form. Upon exposure to heat and other stress stimuli, undergoes homotrimerization and activates HSP gene transcription through binding to site-specific heat shock elements (HSEs) present in the promoter regions of HSP genes. Upon heat shock stress, forms a chromatin-associated complex with TTC5/STRAP and p300/EP300 to stimulate HSR transcription, therefore increasing cell survival. Activation is reversible, and during the attenuation and recovery phase period of the HSR, returns to its unactivated form. Binds to inverted 5'-NGAAN-3' pentamer DNA sequences. Binds to chromatin at heat shock gene promoters. Activates transcription of transcription factor FOXR1 which in turn activates transcription of the heat shock chaperones HSPA1A and HSPA6 and the antioxidant NADPH-dependent reductase DHRS2. Also serves several other functions independently of its transcriptional activity. Involved in the repression of Ras-induced transcriptional activation of the c-fos gene in heat-stressed cells. Positively regulates pre-mRNA 3'-end processing and polyadenylation of HSP70 mRNA upon heat-stressed cells in a symplekin (SYMPK)-dependent manner. Plays a role in nuclear export of stress-induced HSP70 mRNA. Plays a role in the regulation of mitotic progression. Also plays a role as a negative regulator of non-homologous end joining (NHEJ) repair activity in a DNA damage-dependent manner. Involved in stress-induced cancer cell proliferation in a IER5-dependent manner. The chain is Heat shock factor protein 1 from Bos taurus (Bovine).